The primary structure comprises 182 residues: Adenine phosphoribosyltransferase (182 aa).

Belongs to the purine/pyrimidine phosphoribosyltransferase family. In terms of assembly, homodimer.

Its subcellular location is the cytoplasm. It catalyses the reaction AMP + diphosphate = 5-phospho-alpha-D-ribose 1-diphosphate + adenine. The protein operates within purine metabolism; AMP biosynthesis via salvage pathway; AMP from adenine: step 1/1. Its function is as follows. Catalyzes a salvage reaction resulting in the formation of AMP, that is energically less costly than de novo synthesis. The sequence is that of Adenine phosphoribosyltransferase from Campylobacter concisus (strain 13826).